The sequence spans 281 residues: Mad-like protein 1 (281 aa).

Residues 71 to 80 (SCASNASTSS) show a composition bias toward low complexity. Residues 71–105 (SCASNASTSSQPYCSSPPARKSSKHSRTAHNELEK) form a disordered region. The basic motif stretch occupies residues 95–108 (HSRTAHNELEKTRR). The bHLH domain occupies 95–147 (HSRTAHNELEKTRRANLRGCLETLKMLVPCVSDATRNTTLALLTRARDHIIEL). The tract at residues 109 to 147 (ANLRGCLETLKMLVPCVSDATRNTTLALLTRARDHIIEL) is helix-loop-helix motif. Positions 144–185 (IIELQDSNAAQMKKLNDLRDEQDELVAELAQLQADEEVAQAT) form a coiled coil. Residues 189-213 (CQTLSQSRPESRASSFTSTSSRDSP) are disordered. The span at 200 to 212 (RASSFTSTSSRDS) shows a compositional bias: low complexity.

As to quaternary structure, forms heterodimer with mxl-1 in the presence and absence of DNA. Ubiquitinated. Expressed in intestinal cells in adults. Expressed in D-type motor neuron cell bodies.

It is found in the nucleus. Its function is as follows. Transcriptional regulator which binds to the E box motif 5'-CACGTG-3', when in a heterodimeric complex with mxl-1. Involved in the control of lifespan in response to dietary restriction, the decline in protein homeostasis associated with normal aging, germline signaling and may overlap with the insulin-like signaling pathway. Plays a role in autophagy. Involved in promoting infection by the microsporidian pathogen N.parisii, possibly together with transcription factors pha-4 and zip-10. In response to neuronal injury, mdl-1 is targeted by sdz-33 for ubiquitin-mediated degradation, probably thereby reducing levels of mdl-1-mxl-1 heterodimers, allowing free mxl-1 to form complexes with tdpt-1 and thus inhibiting tdpt-1-dependent sumoylation of ets-4. In Caenorhabditis elegans, this protein is Mad-like protein 1.